The sequence spans 587 residues: MPQQLLITPATEATWVKLKEVSLWEDVTKMFGGEALLSHDANGTQQESLADGTTPGTPAAGSHDGATPGTTATGSHDEATPGTPAAGSHDGETPGIPAAGSHDGETPGTPTAGSHDGVTPGTTAAGSQESLTFKDIAVDLSQEEWGQLAPAYQDLYREVMLENYRNLVSVAGYQLSKPTVISQLEKGEGPCMAESQGPEDPILDVKNKLETKESTAEDDISVKLDHGITRGRLIEDDIVCSPLKKASSYSDTLESHRATCGKGTRRAIWTHKKKRQEGNKLENPESSNVILEQKHRKHKPARKRNKYKLDSIDHPVSCMRARRYPCNVCEKMFKQPIHLVEHMRTHTGEKPFRCKECGRAFSQSASLNTHQRIHTGEKPFACEECGKAFRHRSSLNQHHRTHTGEKPFTCDKCQKAFSQNISLVQHLRTHSGEKPFSCSECGKPFRQIRHLSEHVRIHTGEKPYKCTSCCKTFSHRAYLTHHQRIHTGERPYKCKECGKAFRQRIHLSNHRTVHTGVKAYECNRCGKAYRHDSSFKKHQRHHTGEKPYECTECGKSFSYNSSLSRHQKIHRRNTFRDDPGHENKRQL.

A disordered region spans residues 42–128; it reads NGTQQESLAD…TPGTTAAGSQ (87 aa). Residues 76-147 enclose the KRAB domain; the sequence is HDEATPGTPA…VDLSQEEWGQ (72 aa). 9 C2H2-type zinc fingers span residues 271 to 293, 299 to 321, 327 to 349, 355 to 377, 383 to 405, 411 to 433, 439 to 461, 467 to 489, and 495 to 517; these read HKKK…ILEQ, KPAR…CMRA, NVCE…HTGE, KECG…HTGE, EECG…HTGE, DKCQ…HSGE, SECG…HTGE, TSCC…HTGE, and KECG…HTGV. Residues 564 to 587 are disordered; it reads SRHQKIHRRNTFRDDPGHENKRQL. Residues 574 to 587 are compositionally biased toward basic and acidic residues; that stretch reads TFRDDPGHENKRQL.

This sequence belongs to the krueppel C2H2-type zinc-finger protein family.

The protein localises to the nucleus. Putative transcription factor that appears to regulate lipid metabolism. In Mus musculus (Mouse), this protein is Zinc finger protein 69.